We begin with the raw amino-acid sequence, 132 residues long: uncharacterized protein (132 aa).

The next 3 membrane-spanning stretches (helical) occupy residues 18–38 (MLFIFMPFAITSFFAFLFIGI), 50–70 (IIYFFIFAFGFVLPDLPGVFI), and 71–91 (VVPLWAVTIIHGFKVRPLYLI).

It is found in the cell membrane. This is an uncharacterized protein from Bacillus subtilis (strain 168).